The sequence spans 500 residues: Probable cytosol aminopeptidase (500 aa).

Positions 268 and 273 each coordinate Mn(2+). Lys280 is an active-site residue. 3 residues coordinate Mn(2+): Asp291, Asp350, and Glu352. Arg354 is an active-site residue.

This sequence belongs to the peptidase M17 family. Mn(2+) serves as cofactor.

Its subcellular location is the cytoplasm. The catalysed reaction is Release of an N-terminal amino acid, Xaa-|-Yaa-, in which Xaa is preferably Leu, but may be other amino acids including Pro although not Arg or Lys, and Yaa may be Pro. Amino acid amides and methyl esters are also readily hydrolyzed, but rates on arylamides are exceedingly low.. The enzyme catalyses Release of an N-terminal amino acid, preferentially leucine, but not glutamic or aspartic acids.. Functionally, presumably involved in the processing and regular turnover of intracellular proteins. Catalyzes the removal of unsubstituted N-terminal amino acids from various peptides. The chain is Probable cytosol aminopeptidase from Aromatoleum aromaticum (strain DSM 19018 / LMG 30748 / EbN1) (Azoarcus sp. (strain EbN1)).